The following is a 152-amino-acid chain: Ribonuclease HI (152 aa).

An RNase H type-1 domain is found at 1 to 142 (MDSKVVIYTD…ADKLAVQGRE (142 aa)). 4 residues coordinate Mg(2+): D10, E48, D70, and D134.

Belongs to the RNase H family. In terms of assembly, monomer. Mg(2+) is required as a cofactor.

Its subcellular location is the cytoplasm. It catalyses the reaction Endonucleolytic cleavage to 5'-phosphomonoester.. Functionally, endonuclease that specifically degrades the RNA of RNA-DNA hybrids. This chain is Ribonuclease HI (rnhA), found in Rickettsia prowazekii (strain Madrid E).